The chain runs to 252 residues: Hydroxyacylglutathione hydrolase (252 aa).

Zn(2+)-binding residues include His-54, His-56, Asp-58, His-59, His-113, Asp-132, and His-170.

It belongs to the metallo-beta-lactamase superfamily. Glyoxalase II family. Monomer. Requires Zn(2+) as cofactor.

The enzyme catalyses an S-(2-hydroxyacyl)glutathione + H2O = a 2-hydroxy carboxylate + glutathione + H(+). It functions in the pathway secondary metabolite metabolism; methylglyoxal degradation; (R)-lactate from methylglyoxal: step 2/2. Thiolesterase that catalyzes the hydrolysis of S-D-lactoyl-glutathione to form glutathione and D-lactic acid. This is Hydroxyacylglutathione hydrolase from Synechococcus sp. (strain JA-2-3B'a(2-13)) (Cyanobacteria bacterium Yellowstone B-Prime).